The primary structure comprises 734 residues: Ribosomal RNA large subunit methyltransferase K/L (734 aa).

The THUMP domain maps to 43–154 (VGYRSCLWSR…RNQLTLSLDL (112 aa)).

The protein belongs to the methyltransferase superfamily. RlmKL family.

It is found in the cytoplasm. The catalysed reaction is guanosine(2445) in 23S rRNA + S-adenosyl-L-methionine = N(2)-methylguanosine(2445) in 23S rRNA + S-adenosyl-L-homocysteine + H(+). The enzyme catalyses guanosine(2069) in 23S rRNA + S-adenosyl-L-methionine = N(2)-methylguanosine(2069) in 23S rRNA + S-adenosyl-L-homocysteine + H(+). Specifically methylates the guanine in position 2445 (m2G2445) and the guanine in position 2069 (m7G2069) of 23S rRNA. The protein is Ribosomal RNA large subunit methyltransferase K/L of Hydrogenovibrio crunogenus (strain DSM 25203 / XCL-2) (Thiomicrospira crunogena).